The primary structure comprises 125 residues: Small ribosomal subunit protein uS13 (125 aa).

The protein belongs to the universal ribosomal protein uS13 family. As to quaternary structure, part of the 30S ribosomal subunit. Forms a loose heterodimer with protein S19. Forms two bridges to the 50S subunit in the 70S ribosome.

In terms of biological role, located at the top of the head of the 30S subunit, it contacts several helices of the 16S rRNA. In the 70S ribosome it contacts the 23S rRNA (bridge B1a) and protein L5 of the 50S subunit (bridge B1b), connecting the 2 subunits; these bridges are implicated in subunit movement. Contacts the tRNAs in the A and P-sites. The chain is Small ribosomal subunit protein uS13 from Rickettsia typhi (strain ATCC VR-144 / Wilmington).